Consider the following 162-residue polypeptide: Eukaryotic translation initiation factor 5 (162 aa).

Positions 59-162 (PPNLNPAVQG…EKDRMDIFYE (104 aa)) are disordered. Residues 85–109 (GDTNGDTSQVDDQNESLEASVNENS) are compositionally biased toward polar residues. Over residues 148–162 (DLEKREKDRMDIFYE) the composition is skewed to basic and acidic residues.

This sequence belongs to the eIF-2-beta/eIF-5 family.

In terms of biological role, catalyzes the hydrolysis of GTP bound to the 40S ribosomal initiation complex (40S.mRNA.Met-tRNA[F].eIF-2.GTP) with the subsequent joining of a 60S ribosomal subunit resulting in the release of eIF-2 and the guanine nucleotide. The subsequent joining of a 60S ribosomal subunit results in the formation of a functional 80S initiation complex (80S.mRNA.Met-tRNA[F]). In Tribolium castaneum (Red flour beetle), this protein is Eukaryotic translation initiation factor 5.